Reading from the N-terminus, the 88-residue chain is Mitochondrial import inner membrane translocase subunit Tim10 (88 aa).

Residues 29 to 54 (CHRKCVPPHYKEAELSKGEAVCLDRC) carry the Twin CX3C motif motif. 2 disulfides stabilise this stretch: cysteine 29/cysteine 54 and cysteine 33/cysteine 50.

Belongs to the small Tim family. Heterohexamer; composed of 3 copies of TIMM9 and 3 copies of TIMM10/TIM10A, named soluble 70 kDa complex. The complex forms a 6-bladed alpha-propeller structure and associates with the TIMM22 component of the TIM22 complex. Interacts with multi-pass transmembrane proteins in transit.

The protein localises to the mitochondrion inner membrane. In terms of biological role, mitochondrial intermembrane chaperone that participates in the import and insertion of multi-pass transmembrane proteins into the mitochondrial inner membrane. May also be required for the transfer of beta-barrel precursors from the TOM complex to the sorting and assembly machinery (SAM complex) of the outer membrane. Acts as a chaperone-like protein that protects the hydrophobic precursors from aggregation and guide them through the mitochondrial intermembrane space. This chain is Mitochondrial import inner membrane translocase subunit Tim10 (timm10), found in Danio rerio (Zebrafish).